Reading from the N-terminus, the 250-residue chain is Probable transcriptional regulatory protein Plut_1643 (250 aa).

This sequence belongs to the TACO1 family.

Its subcellular location is the cytoplasm. This Chlorobium luteolum (strain DSM 273 / BCRC 81028 / 2530) (Pelodictyon luteolum) protein is Probable transcriptional regulatory protein Plut_1643.